The following is a 151-amino-acid chain: Small ribosomal subunit protein uS15 (151 aa).

The protein belongs to the universal ribosomal protein uS15 family. In terms of assembly, component of the small ribosomal subunit.

Its subcellular location is the cytoplasm. In terms of biological role, component of the small ribosomal subunit. The ribosome is a large ribonucleoprotein complex responsible for the synthesis of proteins in the cell. The chain is Small ribosomal subunit protein uS15 (rps13) from Xenopus laevis (African clawed frog).